Consider the following 142-residue polypeptide: uncharacterized protein (142 aa).

The protein resides in the mitochondrion. This is an uncharacterized protein from Mus musculus (Mouse).